A 67-amino-acid chain; its full sequence is Large ribosomal subunit protein bL31 (67 aa).

4 residues coordinate Zn(2+): Cys-16, Cys-18, Cys-36, and Cys-39.

Belongs to the bacterial ribosomal protein bL31 family. Type A subfamily. In terms of assembly, part of the 50S ribosomal subunit. It depends on Zn(2+) as a cofactor.

In terms of biological role, binds the 23S rRNA. This chain is Large ribosomal subunit protein bL31, found in Treponema denticola (strain ATCC 35405 / DSM 14222 / CIP 103919 / JCM 8153 / KCTC 15104).